Here is a 179-residue protein sequence, read N- to C-terminus: Large ribosomal subunit protein uL6 (179 aa).

The protein belongs to the universal ribosomal protein uL6 family. As to quaternary structure, part of the 50S ribosomal subunit.

Its function is as follows. This protein binds to the 23S rRNA, and is important in its secondary structure. It is located near the subunit interface in the base of the L7/L12 stalk, and near the tRNA binding site of the peptidyltransferase center. This Alkaliphilus oremlandii (strain OhILAs) (Clostridium oremlandii (strain OhILAs)) protein is Large ribosomal subunit protein uL6.